A 122-amino-acid polypeptide reads, in one-letter code: Large ribosomal subunit protein uL14 (122 aa).

This sequence belongs to the universal ribosomal protein uL14 family. As to quaternary structure, part of the 50S ribosomal subunit. Forms a cluster with proteins L3 and L19. In the 70S ribosome, L14 and L19 interact and together make contacts with the 16S rRNA in bridges B5 and B8.

Binds to 23S rRNA. Forms part of two intersubunit bridges in the 70S ribosome. The polypeptide is Large ribosomal subunit protein uL14 (Trichlorobacter lovleyi (strain ATCC BAA-1151 / DSM 17278 / SZ) (Geobacter lovleyi)).